Consider the following 290-residue polypeptide: Acetyl-coenzyme A carboxylase carboxyl transferase subunit beta (290 aa).

Residues 30–290 (IMTKCPKCKK…HAGQEVNKDA (261 aa)) form the CoA carboxyltransferase N-terminal domain. Positions 34, 37, 53, and 56 each coordinate Zn(2+). A C4-type zinc finger spans residues 34 to 56 (CPKCKKIMYTKELSENLNVCFNC).

This sequence belongs to the AccD/PCCB family. Acetyl-CoA carboxylase is a heterohexamer composed of biotin carboxyl carrier protein (AccB), biotin carboxylase (AccC) and two subunits each of ACCase subunit alpha (AccA) and ACCase subunit beta (AccD). It depends on Zn(2+) as a cofactor.

It localises to the cytoplasm. It carries out the reaction N(6)-carboxybiotinyl-L-lysyl-[protein] + acetyl-CoA = N(6)-biotinyl-L-lysyl-[protein] + malonyl-CoA. It functions in the pathway lipid metabolism; malonyl-CoA biosynthesis; malonyl-CoA from acetyl-CoA: step 1/1. Functionally, component of the acetyl coenzyme A carboxylase (ACC) complex. Biotin carboxylase (BC) catalyzes the carboxylation of biotin on its carrier protein (BCCP) and then the CO(2) group is transferred by the transcarboxylase to acetyl-CoA to form malonyl-CoA. The polypeptide is Acetyl-coenzyme A carboxylase carboxyl transferase subunit beta (Staphylococcus carnosus (strain TM300)).